A 364-amino-acid polypeptide reads, in one-letter code: Threonine-phosphate decarboxylase (364 aa).

O-phospho-L-threonine-binding positions include 8-9 (HG), N32, and N157. K216 carries the post-translational modification N6-(pyridoxal phosphate)lysine. The O-phospho-L-threonine site is built by R323 and R337.

The protein belongs to the class-II pyridoxal-phosphate-dependent aminotransferase family. Homodimer. Requires pyridoxal 5'-phosphate as cofactor.

The enzyme catalyses O-phospho-L-threonine + H(+) = (R)-1-aminopropan-2-yl phosphate + CO2. It functions in the pathway cofactor biosynthesis; adenosylcobalamin biosynthesis. In terms of biological role, decarboxylates L-threonine-O-3-phosphate to yield (R)-1-amino-2-propanol O-2-phosphate, the precursor for the linkage between the nucleotide loop and the corrin ring in cobalamin. This Salmonella typhimurium (strain LT2 / SGSC1412 / ATCC 700720) protein is Threonine-phosphate decarboxylase (cobD).